A 450-amino-acid polypeptide reads, in one-letter code: Bifunctional protein GlmU (450 aa).

The interval 1–226 is pyrophosphorylase; sequence MLAVAVLAAG…ADEVNGINNR (226 aa). UDP-N-acetyl-alpha-D-glucosamine contacts are provided by residues 7-10, K21, Q73, and 78-79; these read LAAG and GT. D103 serves as a coordination point for Mg(2+). UDP-N-acetyl-alpha-D-glucosamine contacts are provided by G140, E155, N170, and N224. N224 provides a ligand contact to Mg(2+). The segment at 227 to 247 is linker; the sequence is RQLAQCEALLQQRLRHHWMDE. Residues 248–450 are N-acetyltransferase; sequence GVTFIDPESC…TKEGWAERKV (203 aa). UDP-N-acetyl-alpha-D-glucosamine-binding residues include R329 and K347. H359 functions as the Proton acceptor in the catalytic mechanism. UDP-N-acetyl-alpha-D-glucosamine contacts are provided by Y362 and N373. Residues A376, 382 to 383, A419, and R436 contribute to the acetyl-CoA site; that span reads NY.

This sequence in the N-terminal section; belongs to the N-acetylglucosamine-1-phosphate uridyltransferase family. The protein in the C-terminal section; belongs to the transferase hexapeptide repeat family. In terms of assembly, homotrimer. The cofactor is Mg(2+).

The protein resides in the cytoplasm. It carries out the reaction alpha-D-glucosamine 1-phosphate + acetyl-CoA = N-acetyl-alpha-D-glucosamine 1-phosphate + CoA + H(+). The catalysed reaction is N-acetyl-alpha-D-glucosamine 1-phosphate + UTP + H(+) = UDP-N-acetyl-alpha-D-glucosamine + diphosphate. It participates in nucleotide-sugar biosynthesis; UDP-N-acetyl-alpha-D-glucosamine biosynthesis; N-acetyl-alpha-D-glucosamine 1-phosphate from alpha-D-glucosamine 6-phosphate (route II): step 2/2. Its pathway is nucleotide-sugar biosynthesis; UDP-N-acetyl-alpha-D-glucosamine biosynthesis; UDP-N-acetyl-alpha-D-glucosamine from N-acetyl-alpha-D-glucosamine 1-phosphate: step 1/1. It functions in the pathway bacterial outer membrane biogenesis; LPS lipid A biosynthesis. Catalyzes the last two sequential reactions in the de novo biosynthetic pathway for UDP-N-acetylglucosamine (UDP-GlcNAc). The C-terminal domain catalyzes the transfer of acetyl group from acetyl coenzyme A to glucosamine-1-phosphate (GlcN-1-P) to produce N-acetylglucosamine-1-phosphate (GlcNAc-1-P), which is converted into UDP-GlcNAc by the transfer of uridine 5-monophosphate (from uridine 5-triphosphate), a reaction catalyzed by the N-terminal domain. This Synechococcus sp. (strain CC9605) protein is Bifunctional protein GlmU.